The primary structure comprises 315 residues: Acetaldehyde dehydrogenase 1 (315 aa).

12 to 15 (SGNI) serves as a coordination point for NAD(+). Residue Cys-132 is the Acyl-thioester intermediate of the active site. Residues 163 to 171 (SAGPGTRAN) and Asn-291 contribute to the NAD(+) site.

This sequence belongs to the acetaldehyde dehydrogenase family.

The enzyme catalyses acetaldehyde + NAD(+) + CoA = acetyl-CoA + NADH + H(+). The sequence is that of Acetaldehyde dehydrogenase 1 from Paraburkholderia phymatum (strain DSM 17167 / CIP 108236 / LMG 21445 / STM815) (Burkholderia phymatum).